The primary structure comprises 1337 residues: Rho GTPase-activating protein 29 (1337 aa).

Residues 1–13 (MFRQGSNSGNKRM) show a composition bias toward polar residues. Disordered regions lie at residues 1 to 20 (MFRQ…ARLS), 369 to 397 (REEY…LEKK), 513 to 551 (SSKT…ADEV), and 564 to 654 (ERRS…TGLS). The F-BAR domain maps to 225 to 488 (EQVDLLLLKN…QAKKYEPGQR (264 aa)). A coiled-coil region spans residues 326–443 (LLARKNDLDK…SEILAQIRKL (118 aa)). Basic and acidic residues predominate over residues 369–384 (REEYEKARSSTSRTEE). 2 stretches are compositionally biased toward polar residues: residues 525–545 (QNST…SMDN) and 568–579 (NSSIDMQVPRTQ). The segment covering 596 to 613 (CSDSESAGGSSESRSMDS) has biased composition (low complexity). The segment at 676–723 (AHTHKLRKLRAPSKCRECDSLVVFHGAECEECSLACHKKCLETLAIQC) adopts a Phorbol-ester/DAG-type zinc-finger fold. Positions 737 to 950 (IDFAQVVKNS…LLIKHHQMIF (214 aa)) constitute a Rho-GAP domain. The span at 960-973 (TSPTVSQASFGSSI) shows a compositional bias: polar residues. Disordered regions lie at residues 960–983 (TSPT…LSRH), 1016–1066 (MKTG…AKPV), 1083–1114 (SRNT…TNFY), 1149–1210 (PPSG…KPSD), and 1273–1337 (TVSR…AHFV). The span at 974–983 (QDKESKLSRH) shows a compositional bias: basic and acidic residues. The segment covering 1083-1092 (SRNTVEHDHS) has biased composition (basic and acidic residues). Polar residues-rich tracts occupy residues 1161–1177 (MASQ…SQSG) and 1295–1310 (VTLS…TEEL). The segment covering 1325-1337 (RMQELEHREAHFV) has biased composition (basic and acidic residues).

Its function is as follows. GTPase activator for the Rho-type GTPases by converting them to an inactive GDP-bound state. Has strong activity toward RHOA, and weaker activity toward RAC1 and CDC42. This is Rho GTPase-activating protein 29 (arhgap29) from Danio rerio (Zebrafish).